Consider the following 392-residue polypeptide: Lipid-A-disaccharide synthase (392 aa).

This sequence belongs to the LpxB family.

The enzyme catalyses a lipid X + a UDP-2-N,3-O-bis[(3R)-3-hydroxyacyl]-alpha-D-glucosamine = a lipid A disaccharide + UDP + H(+). It functions in the pathway bacterial outer membrane biogenesis; LPS lipid A biosynthesis. Condensation of UDP-2,3-diacylglucosamine and 2,3-diacylglucosamine-1-phosphate to form lipid A disaccharide, a precursor of lipid A, a phosphorylated glycolipid that anchors the lipopolysaccharide to the outer membrane of the cell. This chain is Lipid-A-disaccharide synthase, found in Prochlorococcus marinus (strain MIT 9313).